The primary structure comprises 325 residues: Zinc metalloproteinase/disintegrin (325 aa).

The propeptide occupies 1 to 39 (KYENVEKGDEAPKKCGVTHTNLESDEPIEKASQLFGTSE). Residue Q40 is modified to Pyrrolidone carboxylic acid. Residues 46–242 (RHIELVIVAD…HNPQRILNEP (197 aa)) form the Peptidase M12B domain. H182 is a binding site for Zn(2+). The active site involves E183. 2 residues coordinate Zn(2+): H186 and H192. Cystine bridges form between C197/C221 and C199/C204. Positions 243 to 257 (LRTDTVSTPVYGNVL) are excised as a propeptide. The region spanning 250-322 (TPVYGNVLQN…SECESNPWNF (73 aa)) is the Disintegrin domain. A Pyrrolidone carboxylic acid modification is found at Q258. Cystine bridges form between C264–C287, C278–C284, C283–C308, and C296–C315. A Cell attachment site motif is present at residues 300–302 (RGD).

The protein belongs to the venom metalloproteinase (M12B) family. P-II subfamily. P-IIe sub-subfamily. As to quaternary structure, heterodimer of bitisgabonin and gabonin-1 (bitisgabonin-1) or gabonin-2 (bitisgabonin-2); disulfide-linked. Zn(2+) is required as a cofactor. In terms of tissue distribution, expressed by the venom gland.

The protein localises to the secreted. In terms of biological role, impairs hemostasis in the envenomed animal. In dimer with gabonin-1 (bitisgabonin-1), is a potent inhibitor of the adhesion of the RGD-dependent integrin alpha-5/beta-1 (ITGA5/ITGB1) to immobilized fibronectin. Its function is as follows. In dimer with gabonin-2 (bitisgabonin-2), preferentially inhibits the adhesion of the alpha-4/beta-1 (ITGA4/ITGB1) and alpha-9/beta-1 (ITGA9/ITGB1) integrins to VCAM-1 and also acts as a strong antagonist of alpha-5/beta-1 (ITGA5/ITGB1). This chain is Zinc metalloproteinase/disintegrin, found in Bitis gabonica (Gaboon adder).